A 349-amino-acid chain; its full sequence is Spermidine/putrescine import ATP-binding protein PotA (349 aa).

Positions 7 to 237 constitute an ABC transporter domain; the sequence is IELKGITKSY…PANSFVAKFI (231 aa). Position 39–46 (39–46) interacts with ATP; the sequence is GPSGCGKT.

This sequence belongs to the ABC transporter superfamily. Spermidine/putrescine importer (TC 3.A.1.11.1) family. As to quaternary structure, the complex is composed of two ATP-binding proteins (PotA), two transmembrane proteins (PotB and PotC) and a solute-binding protein (PotD).

It is found in the cell membrane. The catalysed reaction is ATP + H2O + polyamine-[polyamine-binding protein]Side 1 = ADP + phosphate + polyamineSide 2 + [polyamine-binding protein]Side 1.. In terms of biological role, part of the ABC transporter complex PotABCD involved in spermidine/putrescine import. Responsible for energy coupling to the transport system. In Clostridium perfringens (strain SM101 / Type A), this protein is Spermidine/putrescine import ATP-binding protein PotA.